Reading from the N-terminus, the 164-residue chain is Telomerase-associated protein of 19 kDa (164 aa).

As to quaternary structure, component of the telomerase holoenzyme complex, composed of the catalytic core (the catalytic subunit TERT, the telomerase RNA template component TER and TAP65/p65), which is associated with two heterotrimeric subcomplexes: (i) the replication protein A (RPA)-related subcomplex, composed of TEB1, RPA2/TEB2 and RPA3/TEB3 and (ii) the CST-like subcomplex, composed of TAP75/p75, TAP45/p45 and TAP19/p19. TEB1 and the CST-like subcomplex are tethered to the catalytic core by TAP50/p50.

Its subcellular location is the chromosome. It localises to the telomere. Component of a CST-like subcomplex of the holoenzyme telomerase ribonucleoprotein complex, which stimulates telomerase complementary-strand synthesis. Telomerase is an essential ribonucleoprotein enzyme that copies new telomeric repeats onto chromosome ends by repetitively synthesizing the short telomere-repeat sequence 5'-TTGGGG-3' using an RNA template component TER. The CST-like subcomplex (also named 7-4-1) binds telomeric single-stranded DNA and coordinates telomere G-strand and C-strand synthesis. The chain is Telomerase-associated protein of 19 kDa from Tetrahymena thermophila (strain SB210).